A 200-amino-acid chain; its full sequence is Potassium-transporting ATPase KdpC subunit (200 aa).

A helical transmembrane segment spans residues P7–M27.

This sequence belongs to the KdpC family. The system is composed of three essential subunits: KdpA, KdpB and KdpC.

It localises to the cell inner membrane. Part of the high-affinity ATP-driven potassium transport (or Kdp) system, which catalyzes the hydrolysis of ATP coupled with the electrogenic transport of potassium into the cytoplasm. This subunit acts as a catalytic chaperone that increases the ATP-binding affinity of the ATP-hydrolyzing subunit KdpB by the formation of a transient KdpB/KdpC/ATP ternary complex. The polypeptide is Potassium-transporting ATPase KdpC subunit (Methylocella silvestris (strain DSM 15510 / CIP 108128 / LMG 27833 / NCIMB 13906 / BL2)).